Reading from the N-terminus, the 1019-residue chain is MYILVWKEGQQIRTFQDLEESVQFRTASNITDGQIFSINVTPTMGKGGETGETQLRRLMYLSASTEPENCNADYVGDMAHFATLRNKSIGVSGFYMYSAPFLFQVIQGTDEDLDFLCANGSADPRHQRCIELADGPTTGRMYGWWHLKDSHIDNITKDPAIKTILIEIARSFSSMWSYLPRNAANMVLLGKNPNKQAPEPMSVVVTVIYLVEFSVIMAHPGLSEQCPDILPAFVDACVPHVDGTGGEVAKFIIAICMAYWPINSDEHALVGLQQLSDDLAELRSLQEDGSARSLIYSRCGLHFGRAMLCNAGFRKADFTLLGDWINSASRITSLSVNSKVPLLLSFLVRCLLGDEMRVELERSGLHKVGGRVKPVQVYQFNAPELDTATVRGEIKQFNPGRERALCPVKPYESLHPAHPDPIFDDTPRENQPELSQVQRRDSLVDRLSQIAKLAFPSSMMAGGEGQLITLTYISQAAHPVSRLDLASIQRIAFARNESSNITKSLLYVSGLFVQTLEGTKGAVVSLYLKNRQDKRHKDVVAAFMAPIDEGVYGSPLDMTSATEEMLATFTPLHDVLSQLAKSFISLETYVPSTVVRHLAAGNNPRNLQPVSVEVVMLATAISSFTPLSEKCSLTEVWTICNTFIVACTSAICNEGGEVIKLIGDCVPAYFPPTNADNAVHACQEIVSFCAQLRAAFHDVLDCRSVVACGVGLDYGQVIMVQCGSLGMTEFVVAGEVRARVLEVEALTREAGRAIVITEPVPERQSPKLRDTGIVPCQEGVDGARCYGILGPEWELDVATIKKNINGFLKDARALAANKKVDDGTNISCRGGNPPAGGIPTSPKVRPPGRTNSVSSYTPDPKQALDPRMAESVFLDMCHQGDTVNNSIAVKLGLAANEDGFDGGWILTWYVELMPVKQAIKVLTQLRIGNMSDNFVDDNNVGELLEKCIPTRSLQVLDLSNNPGLTKVIALKPKHNTQVREILLNGTRIAPTEQRKQQTSKNVNRLCASTDLKGSHKYEH.

One can recognise a BLUF 1 domain in the interval 55 to 148 (LRRLMYLSAS…GRMYGWWHLK (94 aa)). In terms of domain architecture, Guanylate cyclase 1 spans 204 to 332 (VVTVIYLVEF…DWINSASRIT (129 aa)). A BLUF 2 domain is found at 467–559 (LITLTYISQA…GVYGSPLDMT (93 aa)). A Guanylate cyclase 2 domain is found at 615–744 (VMLATAISSF…EVRARVLEVE (130 aa)). Positions 825-863 (NISCRGGNPPAGGIPTSPKVRPPGRTNSVSSYTPDPKQA) are disordered.

Belongs to the adenylyl cyclase class-4/guanylyl cyclase family. In terms of assembly, heterotetramer of two alpha and two beta subunits.

The protein localises to the cell projection. It is found in the cilium. Its subcellular location is the flagellum. In Euglena gracilis, this protein is Photoactivated adenylate cyclase subunit alpha-like protein 1224-5/1F.